We begin with the raw amino-acid sequence, 297 residues long: Bifonsecin B biosynthesis cluster protein A (297 aa).

An N-terminal signal peptide occupies residues 1 to 20 (MHFWWTAISAGLLCLPQALG). N-linked (GlcNAc...) asparagine glycans are attached at residues N26, N56, N75, N124, N175, N210, and N280.

Belongs to the bfoA family.

Its function is as follows. Part of the gene cluster that mediates the biosynthesis of bifonsecin B, a dimeric gamma-naphthopyrone. The first step in the biosynthesis of bifonsecin B is the production of gamma-naphthopyrone precursor YWA1 by the non-reducing polyketide synthase albA, via condensation of one acetyl-CoA starter unit with 6 malonyl-CoA units. YWA1 is then methylated by bfoE at position C-6 to yield foncesin which is further methylated at position C-8 by bfoD to produce fonsecin B. A key enzyme in the biosynthetic pathway is the cytochrome P450 monooxygenase bfoB which catalyzes the oxidative dimerization of fonsecin B to bifonsecin B. Bfob also catalyzes the oxidative dimerization of rubrofusarin B into nigerone. The stereoselectivity of bfoB is influenced by the two natural monomeric substrates; homodimerization of fonsecin B yields a stereochemically pure biaryl, M-foncerine B, while rubrofusarin B yields a mixture of enantiomers M- and P-nigerone. The function of bfoA within the bifonsecin B biosynthesis pathway has not been determined yet. This is Bifonsecin B biosynthesis cluster protein A from Aspergillus brasiliensis (strain CBS 101740 / IMI 381727 / IBT 21946).